The chain runs to 88 residues: UPF0237 protein spr0217 (88 aa).

The ACT domain occupies 4-77 (IITVVGKDKS…QTLNVKINIQ (74 aa)).

This sequence belongs to the UPF0237 family. In terms of assembly, homodimer.

The chain is UPF0237 protein spr0217 from Streptococcus pneumoniae (strain ATCC BAA-255 / R6).